Here is a 303-residue protein sequence, read N- to C-terminus: Methionyl-tRNA formyltransferase (303 aa).

108–111 is a binding site for (6S)-5,6,7,8-tetrahydrofolate; it reads SDLP.

It belongs to the Fmt family.

It catalyses the reaction L-methionyl-tRNA(fMet) + (6R)-10-formyltetrahydrofolate = N-formyl-L-methionyl-tRNA(fMet) + (6S)-5,6,7,8-tetrahydrofolate + H(+). In terms of biological role, attaches a formyl group to the free amino group of methionyl-tRNA(fMet). The formyl group appears to play a dual role in the initiator identity of N-formylmethionyl-tRNA by promoting its recognition by IF2 and preventing the misappropriation of this tRNA by the elongation apparatus. In Rickettsia peacockii (strain Rustic), this protein is Methionyl-tRNA formyltransferase.